Reading from the N-terminus, the 388-residue chain is Phosphopentomutase (388 aa).

D11, D283, H288, D324, H325, and H336 together coordinate Mn(2+).

Belongs to the phosphopentomutase family. Requires Mn(2+) as cofactor.

It is found in the cytoplasm. The catalysed reaction is 2-deoxy-alpha-D-ribose 1-phosphate = 2-deoxy-D-ribose 5-phosphate. It carries out the reaction alpha-D-ribose 1-phosphate = D-ribose 5-phosphate. It functions in the pathway carbohydrate degradation; 2-deoxy-D-ribose 1-phosphate degradation; D-glyceraldehyde 3-phosphate and acetaldehyde from 2-deoxy-alpha-D-ribose 1-phosphate: step 1/2. Its function is as follows. Isomerase that catalyzes the conversion of deoxy-ribose 1-phosphate (dRib-1-P) and ribose 1-phosphate (Rib-1-P) to deoxy-ribose 5-phosphate (dRib-5-P) and ribose 5-phosphate (Rib-5-P), respectively. This Enterococcus faecalis (strain ATCC 700802 / V583) protein is Phosphopentomutase.